The sequence spans 312 residues: uncharacterized protein (312 aa).

This is an uncharacterized protein from Escherichia coli O157:H7.